Reading from the N-terminus, the 397-residue chain is ATP-dependent RNA helicase eIF4A (397 aa).

The short motif at 24–52 (DSFDEMNLKPELLRGIYAYGFERPSAIQQ) is the Q motif element. Positions 55-225 (IMPVIKGHDV…TKFMREPVRI (171 aa)) constitute a Helicase ATP-binding domain. 68 to 75 (AQSGTGKT) contributes to the ATP binding site. Residues 173–176 (DEAD) carry the DEAD box motif. Residues 236-397 (GIKQFYIAVE…EMPMNVADLI (162 aa)) form the Helicase C-terminal domain.

It belongs to the DEAD box helicase family. eIF4A subfamily. As to quaternary structure, component of the eIF4F complex, which composition varies with external and internal environmental conditions. It is composed of at least eIF4A, eIF4E and eIF4G.

The protein localises to the cytoplasm. It carries out the reaction ATP + H2O = ADP + phosphate + H(+). Functionally, ATP-dependent RNA helicase which is a subunit of the eIF4F complex involved in cap recognition and is required for mRNA binding to ribosome. In the current model of translation initiation, eIF4A unwinds RNA secondary structures in the 5'-UTR of mRNAs which is necessary to allow efficient binding of the small ribosomal subunit, and subsequent scanning for the initiator codon. The polypeptide is ATP-dependent RNA helicase eIF4A (tif-1) (Neurospora crassa (strain ATCC 24698 / 74-OR23-1A / CBS 708.71 / DSM 1257 / FGSC 987)).